An 87-amino-acid chain; its full sequence is MARVTVEDCLEHVDNRFELVMLSTKRARQLATGGKEPKLAWENDKPTVMALREIAAGVMDYSVIAEAEIVEDEPLFAAFEDESNEAV.

Belongs to the RNA polymerase subunit omega family. In terms of assembly, the RNAP catalytic core consists of 2 alpha, 1 beta, 1 beta' and 1 omega subunit. When a sigma factor is associated with the core the holoenzyme is formed, which can initiate transcription.

It catalyses the reaction RNA(n) + a ribonucleoside 5'-triphosphate = RNA(n+1) + diphosphate. In terms of biological role, promotes RNA polymerase assembly. Latches the N- and C-terminal regions of the beta' subunit thereby facilitating its interaction with the beta and alpha subunits. This is DNA-directed RNA polymerase subunit omega from Pseudomonas syringae pv. syringae (strain B728a).